The primary structure comprises 677 residues: Fermitin family homolog 1 (677 aa).

Positions 96–653 constitute an FERM domain; it reads MLRLRLPNLK…HEYIGGYIFL (558 aa). Residues Ser170, Ser179, and Ser361 each carry the phosphoserine modification. In terms of domain architecture, PH spans 377-473; sequence KLFRPKKLLP…WMAACMLASK (97 aa).

It belongs to the kindlin family. Interacts with the cytoplasmic domain of integrins ITGB1 and ITGB3. Expressed in brain, skeletal muscle, kidney, colon, adrenal gland, prostate, and placenta. Weakly or not expressed in heart, thymus, spleen, liver, small intestine, bone marrow, lung and peripheral blood leukocytes. Overexpressed in some colon and lung tumors. In skin, it is localized within the epidermis and particularly in basal keratocytes. Not detected in epidermal melanocytes and dermal fibroblasts.

It is found in the cytoplasm. It localises to the cytoskeleton. The protein resides in the cell junction. Its subcellular location is the focal adhesion. The protein localises to the cell projection. It is found in the ruffle membrane. Functionally, involved in cell adhesion. Contributes to integrin activation. When coexpressed with talin, potentiates activation of ITGA2B. Required for normal keratinocyte proliferation. Required for normal polarization of basal keratinocytes in skin, and for normal cell shape. Required for normal adhesion of keratinocytes to fibronectin and laminin, and for normal keratinocyte migration to wound sites. May mediate TGF-beta 1 signaling in tumor progression. The sequence is that of Fermitin family homolog 1 (FERMT1) from Homo sapiens (Human).